Here is a 329-residue protein sequence, read N- to C-terminus: Beta-ketoacyl-[acyl-carrier-protein] synthase III (329 aa).

Catalysis depends on residues Cys-123 and His-256. Positions 257 to 261 (QANVR) are ACP-binding. Asn-286 is an active-site residue.

Belongs to the thiolase-like superfamily. FabH family. In terms of assembly, homodimer.

It localises to the cytoplasm. The catalysed reaction is malonyl-[ACP] + acetyl-CoA + H(+) = 3-oxobutanoyl-[ACP] + CO2 + CoA. It participates in lipid metabolism; fatty acid biosynthesis. Catalyzes the condensation reaction of fatty acid synthesis by the addition to an acyl acceptor of two carbons from malonyl-ACP. Catalyzes the first condensation reaction which initiates fatty acid synthesis and may therefore play a role in governing the total rate of fatty acid production. Possesses both acetoacetyl-ACP synthase and acetyl transacylase activities. Its substrate specificity determines the biosynthesis of branched-chain and/or straight-chain of fatty acids. This chain is Beta-ketoacyl-[acyl-carrier-protein] synthase III, found in Bordetella parapertussis (strain 12822 / ATCC BAA-587 / NCTC 13253).